A 575-amino-acid polypeptide reads, in one-letter code: Putative diflavin flavoprotein A 4 (575 aa).

The tract at residues 41–234 (QRGTTANSYL…LGARSYAPGH (194 aa)) is zinc metallo-hydrolase. Residues 263 to 405 (VALLYTSAYG…AGATFAQTLK (143 aa)) form the Flavodoxin-like domain. Residues 429–575 (VGRIIGSLCV…AVEHRKSGSH (147 aa)) are flavodoxin-reductase-like.

It in the N-terminal section; belongs to the zinc metallo-hydrolase group 3 family. The protein in the C-terminal section; belongs to the flavodoxin reductase family. The cofactor is Fe cation.

Its function is as follows. Mediates electron transfer from NADH to oxygen, reducing it to water. This modular protein has 3 redox cofactors, in other organisms the same activity requires 2 or 3 proteins. This Nostoc sp. (strain PCC 7120 / SAG 25.82 / UTEX 2576) protein is Putative diflavin flavoprotein A 4 (dfa4).